We begin with the raw amino-acid sequence, 137 residues long: NADH dehydrogenase [ubiquinone] 1 beta subcomplex subunit 7 (137 aa).

Glycine 2 is lipidated: N-myristoyl glycine. The CHCH domain maps to 56-98 (RDYCAHYLIRFLKCKRDSFPNFLACKHERHDWDYCEHLDYVKR). A Cx9C motif 1 motif is present at residues 59–69 (CAHYLIRFLKC). Cystine bridges form between cysteine 59/cysteine 90 and cysteine 69/cysteine 80. Position 73 is a phosphoserine (serine 73). The Cx9C motif 2 motif lies at 80–90 (CKHERHDWDYC). The tract at residues 110–137 (QRKKRREQREADMAKGLGPGEVAPEVAL) is disordered.

Belongs to the complex I NDUFB7 subunit family. Complex I is composed of 45 different subunits.

The protein resides in the mitochondrion inner membrane. It is found in the mitochondrion intermembrane space. In terms of biological role, accessory subunit of the mitochondrial membrane respiratory chain NADH dehydrogenase (Complex I), that is believed not to be involved in catalysis. Complex I functions in the transfer of electrons from NADH to the respiratory chain. The immediate electron acceptor for the enzyme is believed to be ubiquinone. This is NADH dehydrogenase [ubiquinone] 1 beta subcomplex subunit 7 (NDUFB7) from Bos taurus (Bovine).